Reading from the N-terminus, the 420-residue chain is Gamma-glutamyl phosphate reductase (420 aa).

It belongs to the gamma-glutamyl phosphate reductase family.

Its subcellular location is the cytoplasm. The catalysed reaction is L-glutamate 5-semialdehyde + phosphate + NADP(+) = L-glutamyl 5-phosphate + NADPH + H(+). Its pathway is amino-acid biosynthesis; L-proline biosynthesis; L-glutamate 5-semialdehyde from L-glutamate: step 2/2. Functionally, catalyzes the NADPH-dependent reduction of L-glutamate 5-phosphate into L-glutamate 5-semialdehyde and phosphate. The product spontaneously undergoes cyclization to form 1-pyrroline-5-carboxylate. In Neisseria gonorrhoeae (strain ATCC 700825 / FA 1090), this protein is Gamma-glutamyl phosphate reductase.